A 517-amino-acid chain; its full sequence is DNA-(apurinic or apyrimidinic site) endonuclease 2 (517 aa).

The Mg(2+) site is built by asparagine 9 and glutamate 34. A Claspin-like CKB motif motif is present at residues 82-90; sequence EEGLSGVFC. The active site involves tyrosine 142. 4 residues coordinate Mg(2+): aspartate 183, asparagine 185, aspartate 299, and histidine 300. Aspartate 183 serves as the catalytic Proton donor/acceptor. Residue histidine 300 is the Proton acceptor of the active site. Polar residues predominate over residues 347–362; it reads GNTTEESSELTGTPSF. A disordered region spans residues 347 to 366; sequence GNTTEESSELTGTPSFTEGA. Residues 395 to 402 carry the PCNA interacting protein (PIP) box motif; the sequence is QGNLLSFF. Residues cysteine 463, histidine 466, cysteine 489, and cysteine 503 each coordinate Zn(2+). Residues 463–512 form a GRF-type zinc finger; the sequence is CKGHSEPCVLRTVKKAGPNCGRQFYVCARPEGHSSNPQARCNFFLWLTKK.

This sequence belongs to the DNA repair enzymes AP/ExoA family. As to quaternary structure, interacts (via PIP box and GRF-type Zinc finger domain) with pcna; the interaction is required for 3 -5 SSB end resection, assembly of a checkpoint protein complex to SSB sites, and SSB signaling. Interacts with chek1. It depends on Mg(2+) as a cofactor. Requires Mn(2+) as cofactor. As to expression, expressed in eggs (at protein level).

It localises to the nucleus. It is found in the chromosome. Its subcellular location is the cytoplasm. The protein localises to the mitochondrion. It carries out the reaction Exonucleolytic cleavage in the 3'- to 5'-direction to yield nucleoside 5'-phosphates.. Its activity is regulated as follows. 3'-5' nuclease activity is stimulated in presence of pcna. Its function is as follows. Functions as a weak apurinic/apyrimidinic (AP) endodeoxyribonuclease in the DNA base excision repair (BER) pathway of DNA lesions induced by oxidative and alkylating agents. Initiates repair of AP sites in DNA by catalyzing hydrolytic incision of the phosphodiester backbone immediately adjacent to the damage, generating a single-strand break with 5'-deoxyribose phosphate and 3'-hydroxyl ends. Exhibits 3'-5' exonuclease activity on a 3' DNA substrate; nuclease activity is stimulated by interaction with pcna. Has a preference for the 3' recessed ends over blunt-ended substrates, in both the presence and the absence of pcna. Generates single-stranded DNA (ssDNA) via 3'-5' single-strand break (SSB) end resection, thereby promoting a DNA damage response via replication protein A (rpa2)-binding to ssDNA and the recruitment of a checkpoint protein complex, including atr, atr-interacting protein atrip, and rad9, to damage sites following oxidative stress. Plays a role in reversing blocked 3' DNA ends, problematic lesions that preclude DNA synthesis. Required for chek1 phosphorylation induced by hydrogen peroxide but not by stalled replication forks. In Xenopus laevis (African clawed frog), this protein is DNA-(apurinic or apyrimidinic site) endonuclease 2.